The chain runs to 88 residues: Apolipoprotein C-I (88 aa).

An N-terminal signal peptide occupies residues 1–26 (MRLFIALPVLIVVVAMTLEGPAPAQA).

It belongs to the apolipoprotein C1 family. Adult and fetal liver.

The protein resides in the secreted. In terms of biological role, inhibitor of lipoprotein binding to the low density lipoprotein (LDL) receptor, LDL receptor-related protein, and very low density lipoprotein (VLDL) receptor. Associates with high density lipoproteins (HDL) and the triacylglycerol-rich lipoproteins in the plasma and makes up about 10% of the protein of the VLDL and 2% of that of HDL. Appears to interfere directly with fatty acid uptake and is also the major plasma inhibitor of cholesteryl ester transfer protein (CETP). Modulates the interaction of APOE with beta-migrating VLDL and inhibits binding of beta-VLDL to the LDL receptor-related protein. Binds free fatty acids and reduces their intracellular esterification. In Mus musculus (Mouse), this protein is Apolipoprotein C-I (Apoc1).